Consider the following 288-residue polypeptide: 2-hydroxy-6-oxononadienedioate/2-hydroxy-6-oxononatrienedioate hydrolase (288 aa).

His267 serves as the catalytic Proton acceptor.

The protein belongs to the AB hydrolase superfamily. MhpC family. As to quaternary structure, homodimer.

It catalyses the reaction (2Z,4E)-2-hydroxy-6-oxonona-2,4-dienedioate + H2O = (2Z)-2-hydroxypenta-2,4-dienoate + succinate + H(+). The catalysed reaction is (2Z,4E,7E)-2-hydroxy-6-oxonona-2,4,7-trienedioate + H2O = (2Z)-2-hydroxypenta-2,4-dienoate + fumarate + H(+). It functions in the pathway aromatic compound metabolism; 3-phenylpropanoate degradation. In terms of biological role, catalyzes the cleavage of the C5-C6 bond of 2-hydroxy-6-oxononadienedioate and 2-hydroxy-6-oxononatrienedioate, a dienol ring fission product of the bacterial meta-cleavage pathway for degradation of phenylpropionic acid. The sequence is that of 2-hydroxy-6-oxononadienedioate/2-hydroxy-6-oxononatrienedioate hydrolase from Escherichia coli (strain K12 / DH10B).